The primary structure comprises 457 residues: TnpB-like protein ORF457 (457 aa).

The disordered stretch occupies residues 1–22; it reads MPPSSGQLLGDEEREPTSTPAI.

The protein in the N-terminal section; belongs to the transposase 2 family. In the C-terminal section; belongs to the transposase 35 family.

In Acidianus two-tailed virus (ATV), this protein is TnpB-like protein ORF457.